Here is a 173-residue protein sequence, read N- to C-terminus: Large ribosomal subunit protein uL10 (173 aa).

This sequence belongs to the universal ribosomal protein uL10 family. Part of the ribosomal stalk of the 50S ribosomal subunit. The N-terminus interacts with L11 and the large rRNA to form the base of the stalk. The C-terminus forms an elongated spine to which L12 dimers bind in a sequential fashion forming a multimeric L10(L12)X complex.

In terms of biological role, forms part of the ribosomal stalk, playing a central role in the interaction of the ribosome with GTP-bound translation factors. The protein is Large ribosomal subunit protein uL10 of Christiangramia forsetii (strain DSM 17595 / CGMCC 1.15422 / KT0803) (Gramella forsetii).